The sequence spans 493 residues: 3-octaprenyl-4-hydroxybenzoate carboxy-lyase (493 aa).

Position 172 (N172) interacts with Mn(2+). Prenylated FMN is bound by residues 175-177, 189-191, and 194-195; these read IYR, RWL, and RG. E238 provides a ligand contact to Mn(2+). D287 serves as the catalytic Proton donor.

It belongs to the UbiD family. Homohexamer. Requires prenylated FMN as cofactor. Mn(2+) serves as cofactor.

Its subcellular location is the cell membrane. The enzyme catalyses a 4-hydroxy-3-(all-trans-polyprenyl)benzoate + H(+) = a 2-(all-trans-polyprenyl)phenol + CO2. It participates in cofactor biosynthesis; ubiquinone biosynthesis. In terms of biological role, catalyzes the decarboxylation of 3-octaprenyl-4-hydroxy benzoate to 2-octaprenylphenol, an intermediate step in ubiquinone biosynthesis. This chain is 3-octaprenyl-4-hydroxybenzoate carboxy-lyase, found in Shewanella frigidimarina (strain NCIMB 400).